The primary structure comprises 57 residues: Major exported protein (57 aa).

Belongs to the hcp1 family. As to quaternary structure, homodimer.

It is found in the secreted. This is Major exported protein from Pseudomonas syringae pv. ribicola.